Consider the following 299-residue polypeptide: Ribosomal RNA small subunit methyltransferase H (299 aa).

Residues 32–34 (AGH), aspartate 52, phenylalanine 79, aspartate 100, and glutamine 107 contribute to the S-adenosyl-L-methionine site.

The protein belongs to the methyltransferase superfamily. RsmH family.

Its subcellular location is the cytoplasm. It catalyses the reaction cytidine(1402) in 16S rRNA + S-adenosyl-L-methionine = N(4)-methylcytidine(1402) in 16S rRNA + S-adenosyl-L-homocysteine + H(+). Specifically methylates the N4 position of cytidine in position 1402 (C1402) of 16S rRNA. This Mycoplasmopsis pulmonis (strain UAB CTIP) (Mycoplasma pulmonis) protein is Ribosomal RNA small subunit methyltransferase H.